Reading from the N-terminus, the 548-residue chain is Fluconazole resistance protein 1 (548 aa).

The tract at residues 30-94 is disordered; the sequence is SAREDETRKP…WNGPSDPENP (65 aa). The span at 31 to 51 shows a compositional bias: basic and acidic residues; that stretch reads AREDETRKPENTDKKECKPDY. The segment covering 60-73 has biased composition (low complexity); the sequence is SCSESSTDSDSSGS. The next 12 membrane-spanning stretches (helical) occupy residues 104–124, 139–159, 179–199, 203–223, 230–250, 261–281, 347–367, 376–396, 416–436, 440–460, 476–496, and 511–531; these read LVVF…SIYT, VVAT…PIIF, FFFM…GLIV, ISGI…ADII, LVLG…PLLG, FIFW…AFFF, IAVA…VFVG, VGLA…LFGI, FLIV…LFGW, VHWI…FNIF, ASVF…FPLF, and VAWG…IPFI.

The protein belongs to the major facilitator superfamily.

The protein localises to the membrane. Its function is as follows. Probable efflux transporter. Confers resistance to the azole derivative fluconazole (FCZ). The protein is Fluconazole resistance protein 1 (FLR1) of Saccharomyces cerevisiae (strain ATCC 204508 / S288c) (Baker's yeast).